The chain runs to 195 residues: 3-isopropylmalate dehydratase small subunit (195 aa).

Belongs to the LeuD family. LeuD type 1 subfamily. As to quaternary structure, heterodimer of LeuC and LeuD.

It catalyses the reaction (2R,3S)-3-isopropylmalate = (2S)-2-isopropylmalate. It functions in the pathway amino-acid biosynthesis; L-leucine biosynthesis; L-leucine from 3-methyl-2-oxobutanoate: step 2/4. Its function is as follows. Catalyzes the isomerization between 2-isopropylmalate and 3-isopropylmalate, via the formation of 2-isopropylmaleate. The protein is 3-isopropylmalate dehydratase small subunit of Corynebacterium kroppenstedtii (strain DSM 44385 / JCM 11950 / CIP 105744 / CCUG 35717).